Reading from the N-terminus, the 208-residue chain is ATP phosphoribosyltransferase (208 aa).

This sequence belongs to the ATP phosphoribosyltransferase family. Short subfamily. As to quaternary structure, heteromultimer composed of HisG and HisZ subunits.

The protein resides in the cytoplasm. It catalyses the reaction 1-(5-phospho-beta-D-ribosyl)-ATP + diphosphate = 5-phospho-alpha-D-ribose 1-diphosphate + ATP. It functions in the pathway amino-acid biosynthesis; L-histidine biosynthesis; L-histidine from 5-phospho-alpha-D-ribose 1-diphosphate: step 1/9. Functionally, catalyzes the condensation of ATP and 5-phosphoribose 1-diphosphate to form N'-(5'-phosphoribosyl)-ATP (PR-ATP). Has a crucial role in the pathway because the rate of histidine biosynthesis seems to be controlled primarily by regulation of HisG enzymatic activity. In Thermotoga petrophila (strain ATCC BAA-488 / DSM 13995 / JCM 10881 / RKU-1), this protein is ATP phosphoribosyltransferase.